A 110-amino-acid polypeptide reads, in one-letter code: Glutaredoxin-2 (110 aa).

Residues 6–106 (KAFVEKAISN…KMIAELKENK (101 aa)) enclose the Glutaredoxin domain. C26 and C29 are disulfide-bonded.

Belongs to the glutaredoxin family.

In terms of biological role, the disulfide bond functions as an electron carrier in the glutathione-dependent synthesis of deoxyribonucleotides by the enzyme ribonucleotide reductase. In addition, it is also involved in reducing some disulfides in a coupled system with glutathione reductase. Thioltransferase catalyzes cellular thiol-disulfide transhydrogenation reactions. It transfers reducing equivalents to cytosolic protein and nonprotein disulfides. The chain is Glutaredoxin-2 (grx2) from Schizosaccharomyces pombe (strain 972 / ATCC 24843) (Fission yeast).